The primary structure comprises 698 residues: Dual trans-enoyl reductase/FAD-dependent monooxygenase tazHJ (698 aa).

NADP(+) contacts are provided by residues 54 to 57 (STAT), 78 to 81 (SPRH), Tyr96, and 279 to 280 (IA). Glu299, Gly312, and Arg372 together coordinate FAD. Arg455 is an active-site residue. Asp571 and Ala584 together coordinate FAD.

In the N-terminal section; belongs to the zinc-containing alcohol dehydrogenase family. The protein in the C-terminal section; belongs to the paxM FAD-dependent monooxygenase family.

The protein operates within secondary metabolite biosynthesis. Its function is as follows. Dual trans-enoyl reductase/FAD-dependent monooxygenase; part of the gene cluster that mediates the biosynthesis of azaterrilone A and other azaphilones, a class of fungal metabolites characterized by a highly oxygenated pyrano-quinone bicyclic core and exhibiting a broad range of bioactivities. The first step of the pathway begins with the non-reducing polyketide synthase tazA that assembles one acetyl-CoA starter unit, five malonyl-CoA units, and catalyzes a series of Claisen condensations, methylation, PT-mediated cyclization, and finally releases the first hexaketide precursor through the R-domain. The tazA product then undergoes reduction on its terminal ketone and the following pyran-ring formation by yet undetermined enzyme(s). Dehydration and enoyl reduction, possibly involving the trans-enoyl reductase tazE leads to the next intermediate. TazD is predicted as an acetyltransferase and might catalyze the acetylation steps leading to the synthesis of azaterrilone A. Azaterrilone A is not the final product of the taz pathway and both the highly reducing polyketide synthase tazB and the dual enzyme tazHJ catalyze late steps of the pathway, leading to the production of the 2 final stereoisomers that contain additional polyketide modification whose structures have still to be determined. The sequence is that of Dual trans-enoyl reductase/FAD-dependent monooxygenase tazHJ from Aspergillus terreus (strain NIH 2624 / FGSC A1156).